A 369-amino-acid chain; its full sequence is 3-methylarginine biosynthesis aminotransferase ArgM (369 aa).

K216 is subject to N6-(pyridoxal phosphate)lysine.

It belongs to the class-I pyridoxal-phosphate-dependent aminotransferase family. Pyridoxal 5'-phosphate serves as cofactor.

It carries out the reaction L-arginine + 2-oxoglutarate = 5-guanidino-2-oxopentanoate + L-glutamate. The enzyme catalyses (3R)-5-guanidino-3-methyl-2-oxopentanoate + L-aspartate = (3R)-3-methyl-L-arginine + oxaloacetate. The protein operates within antibiotic biosynthesis. Aminotransferase involved in the formation of the rare amino acid 3-methylarginine (MeArg), which is incorporated into the peptidyl nucleoside antibiotic arginomycin. Catalyzes two rounds of transamination: the transfer of the amino group from L-arginine to 2-oxoglutarate to give glutamate and 5-guanidino-2-oxopentanoic acid, which will be methylated by ArgN. Then, ArgM specifically catalyzes transamination from the donor L-aspartate to the 5-guanidino-3-methyl-2-oxopentanoic acid produced by ArgN, generating the final product, 3-methylarginine. Cannot use arginine analogs, such as D-arginine, L-homoarginine and N-methylarginine for the first transamination. This chain is 3-methylarginine biosynthesis aminotransferase ArgM, found in Streptomyces arginensis.